A 448-amino-acid polypeptide reads, in one-letter code: tRNA modification GTPase MnmE (448 aa).

Arginine 21, glutamate 80, and lysine 119 together coordinate (6S)-5-formyl-5,6,7,8-tetrahydrofolate. In terms of domain architecture, TrmE-type G spans 215–370 (GVKLAIVGRP…LSEEILKKVG (156 aa)). Position 225 (asparagine 225) interacts with K(+). GTP-binding positions include 225 to 230 (NVGKSS), 244 to 250 (TDIAGTT), and 269 to 272 (DTAG). Serine 229 contacts Mg(2+). Threonine 244, isoleucine 246, and threonine 249 together coordinate K(+). Residue threonine 250 participates in Mg(2+) binding. Residue lysine 448 coordinates (6S)-5-formyl-5,6,7,8-tetrahydrofolate.

This sequence belongs to the TRAFAC class TrmE-Era-EngA-EngB-Septin-like GTPase superfamily. TrmE GTPase family. As to quaternary structure, homodimer. Heterotetramer of two MnmE and two MnmG subunits. K(+) serves as cofactor.

It is found in the cytoplasm. Its function is as follows. Exhibits a very high intrinsic GTPase hydrolysis rate. Involved in the addition of a carboxymethylaminomethyl (cmnm) group at the wobble position (U34) of certain tRNAs, forming tRNA-cmnm(5)s(2)U34. The protein is tRNA modification GTPase MnmE of Aquifex aeolicus (strain VF5).